A 405-amino-acid chain; its full sequence is Polyadenylate-binding protein RBP45B (405 aa).

The segment covering 1–19 (MMQQPPPGGILPHHAPPPS) has biased composition (pro residues). Residues 1–54 (MMQQPPPGGILPHHAPPPSAQQQYGYQQPYGIAGAAPPPPQMWNPQAAAPPSVQ) are disordered. Positions 20–35 (AQQQYGYQQPYGIAGA) are enriched in low complexity. 3 RRM domains span residues 62–143 (RTLW…WASL), 155–234 (YTIF…PAAS), and 261–333 (TTVF…WGRS). A disordered region spans residues 379–405 (GGYQQTPQAGQQPPQQPPQQQQVGFSY). Low complexity predominate over residues 380–405 (GYQQTPQAGQQPPQQPPQQQQVGFSY).

It belongs to the polyadenylate-binding RBP45 family. In terms of assembly, both isoform 1 and isoform 2 interact with poly(A)+ RNA in nucleus. Expressed in roots, leaves, stems, flowers, siliques, and seedlings. Present in immature anther tissues (tapetum cells) and mature pollen grains.

The protein resides in the nucleus. Functionally, heterogeneous nuclear ribonucleoprotein (hnRNP)-protein binding the poly(A) tail of mRNA and probably involved in some steps of pre-mRNA maturation. The chain is Polyadenylate-binding protein RBP45B (RBP45B) from Arabidopsis thaliana (Mouse-ear cress).